Here is a 424-residue protein sequence, read N- to C-terminus: Cyclin-dependent kinase D-1 (424 aa).

Residues 19–299 (YLKREVLGEG…AQQALEHRYF (281 aa)) form the Protein kinase domain. Residues 25–33 (LGEGTYGVV) and lysine 48 each bind ATP. The residue at position 29 (threonine 29) is a Phosphothreonine. The residue at position 30 (tyrosine 30) is a Phosphotyrosine. Aspartate 141 (proton acceptor) is an active-site residue. Residue serine 168 is modified to Phosphoserine. Position 174 is a phosphothreonine (threonine 174). Disordered regions lie at residues 303-337 (PAPT…PVVL) and 359-424 (ADRT…GYTE). Positions 359–374 (ADRTEEHPSGARHMDD) are enriched in basic and acidic residues.

It belongs to the protein kinase superfamily. CMGC Ser/Thr protein kinase family. CDC2/CDKX subfamily.

Its subcellular location is the nucleus. The catalysed reaction is L-seryl-[protein] + ATP = O-phospho-L-seryl-[protein] + ADP + H(+). It carries out the reaction L-threonyl-[protein] + ATP = O-phospho-L-threonyl-[protein] + ADP + H(+). It catalyses the reaction [DNA-directed RNA polymerase] + ATP = phospho-[DNA-directed RNA polymerase] + ADP + H(+). This Oryza sativa subsp. indica (Rice) protein is Cyclin-dependent kinase D-1 (CDKD-1).